The chain runs to 465 residues: MAMTGSTPCSSMSNHTKERVTMTKVTLENFYSNLIAQHEEREMRQKKLEKVMEEEGLKDEEKRLRRSAHARKETEFLRLKRTRLGLEDFESLKVIGRGAFGEVRLVQKKDTGHVYAMKILRKADMLEKEQVGHIRAERDILVEADSLWVVKMFYSFQDKLNLYLIMEFLPGGDMMTLLMKKDTLTEEETQFYIAETVLAIDSIHQLGFIHRDIKPDNLLLDSKGHVKLSDFGLCTGLKKAHRTEFYRNLNHSLPSDFTFQNMNSKRKAETWKRNRRQLAFSTVGTPDYIAPEVFMQTGYNKLCDWWSLGVIMYEMLIGYPPFCSETPQETYKKVMNWKETLTFPPEVPVSEKAKGLILRFCCEWEHRIGAPGVEEIKNNLFFEGVDWEHIRERPAAISIEIKSIDDTSNFDEFPESDILKPTVTTSSHPETDYKNKDWVFINYTYKRFEGLTARGAIPSYMKAAK.

Position 2 is an N-acetylalanine (Ala2). The tract at residues 62–87 (KRLRRSAHARKETEFLRLKRTRLGLE) is interaction with S100B. Thr74 carries the post-translational modification Phosphothreonine. A Protein kinase domain is found at 89 to 382 (FESLKVIGRG…VEEIKNNLFF (294 aa)). ATP contacts are provided by residues 95 to 103 (IGRGAFGEV) and Lys118. Residue Asp212 is the Proton acceptor of the active site. Ser264 carries the post-translational modification Phosphoserine. Ser281 is subject to Phosphoserine; by autocatalysis. The short motif at 306 to 311 (WSLGVI) is the UFM1-interacting motif (UFIM) element. One can recognise an AGC-kinase C-terminal domain in the interval 383 to 455 (EGVDWEHIRE…KRFEGLTARG (73 aa)). Position 444 is a phosphothreonine; by STK24/MST3 (Thr444).

The protein belongs to the protein kinase superfamily. AGC Ser/Thr protein kinase family. As to quaternary structure, homodimeric S100B binds two molecules of STK38. Interacts with MOB1 and MOB2. Interacts with MAP3K1 and MAP3K2 (via the kinase catalytic domain). Forms a tripartite complex with MOBKL1B and STK3/MST2. Interacts with MICAL1; leading to inhibit the protein kinase activity by antagonizing activation by MST1/STK4. The cofactor is Mg(2+). In terms of processing, ISGylated. Phosphorylated by STK3/MST2 and this is enhanced by MOBKL1B. As to expression, expressed at high levels in spleen, lung, thymus, brain and fat tissue.

The protein localises to the nucleus. Its subcellular location is the cytoplasm. It localises to the chromosome. It catalyses the reaction L-seryl-[protein] + ATP = O-phospho-L-seryl-[protein] + ADP + H(+). The enzyme catalyses L-threonyl-[protein] + ATP = O-phospho-L-threonyl-[protein] + ADP + H(+). Its activity is regulated as follows. Activated by binding of S100B which releases autoinhibitory N-lobe interactions, enabling ATP to bind and the autophosphorylation of Ser-281. Thr-444 then undergoes calcium-dependent phosphorylation by STK24/MST3. Interactions between phosphorylated Thr-444 and the N-lobe promote additional structural changes that complete the activation of the kinase. Autoinhibition is also released by the binding of MOB1/MOBKL1A and MOB2/HCCA2 to the N-terminal of STK38. Functionally, serine/threonine-protein kinase that acts as a negative regulator of MAP3K1/2 signaling. Converts MAP3K2 from its phosphorylated form to its non-phosphorylated form and inhibits autophosphorylation of MAP3K2. Acts as an ufmylation 'reader' in a kinase-independent manner: specifically recognizes and binds mono-ufmylated histone H4 in response to DNA damage, promoting the recruitment of SUV39H1 to the double-strand breaks, resulting in ATM activation. This chain is Serine/threonine-protein kinase 38, found in Mus musculus (Mouse).